The primary structure comprises 249 residues: 2,3,4,5-tetrahydropyridine-2,6-dicarboxylate N-acetyltransferase (249 aa).

Belongs to the transferase hexapeptide repeat family. DapH subfamily.

It carries out the reaction (S)-2,3,4,5-tetrahydrodipicolinate + acetyl-CoA + H2O = L-2-acetamido-6-oxoheptanedioate + CoA. The protein operates within amino-acid biosynthesis; L-lysine biosynthesis via DAP pathway; LL-2,6-diaminopimelate from (S)-tetrahydrodipicolinate (acetylase route): step 1/3. In terms of biological role, catalyzes the transfer of an acetyl group from acetyl-CoA to tetrahydrodipicolinate. This is 2,3,4,5-tetrahydropyridine-2,6-dicarboxylate N-acetyltransferase from Fervidobacterium nodosum (strain ATCC 35602 / DSM 5306 / Rt17-B1).